A 33-amino-acid chain; its full sequence is Dermaseptin-H6 (33 aa).

Leucine 33 bears the Leucine amide mark.

In terms of tissue distribution, expressed by the skin glands.

The protein resides in the secreted. Functionally, has antimicrobial activity. This chain is Dermaseptin-H6, found in Pithecopus hypochondrialis (Orange-legged leaf frog).